A 293-amino-acid polypeptide reads, in one-letter code: Ribosomal protein L11 methyltransferase (293 aa).

Residues Thr-145, Gly-166, Asp-188, and Asn-230 each contribute to the S-adenosyl-L-methionine site.

Belongs to the methyltransferase superfamily. PrmA family.

It localises to the cytoplasm. It catalyses the reaction L-lysyl-[protein] + 3 S-adenosyl-L-methionine = N(6),N(6),N(6)-trimethyl-L-lysyl-[protein] + 3 S-adenosyl-L-homocysteine + 3 H(+). Functionally, methylates ribosomal protein L11. The sequence is that of Ribosomal protein L11 methyltransferase from Mannheimia succiniciproducens (strain KCTC 0769BP / MBEL55E).